Here is an 843-residue protein sequence, read N- to C-terminus: Proto-oncogene vav (843 aa).

In terms of domain architecture, Calponin-homology (CH) spans 1 to 119 (MELWRQCTHW…YTLSALSWTP (119 aa)). The DH domain occupies 194–373 (KRCCCLREIQ…RDLAQCVNEV (180 aa)). A PH domain is found at 402 to 504 (RPKIDGELKI…WMEQFEMAIS (103 aa)). The Phorbol-ester/DAG-type zinc finger occupies 515–564 (GHDFQMFSFEETTSCKACQMLLRGTFYQGYRCYRCRAPAHKECLGRVPPC). The region spanning 590-658 (LGLPKMEVCQ…PCNRVRPYVH (69 aa)) is the SH3 1 domain. The SH2 domain occupies 669 to 763 (WYAGPMERAG…SLDTTLQFPY (95 aa)). The SH3 2 domain maps to 780-840 (KYFGTAKARY…PSNYVEEDYS (61 aa)). Y824 and Y842 each carry phosphotyrosine.

Interacts with SHB. Interacts with APS, DOCK2, GRB2, GRB3, DOCK2, SLA, TEC and ZNF655/VIK. Interacts with SIAH2; without leading to its degradation. Associates with BLNK, PLCG1, GRB2 and NCK1 in a B-cell antigen receptor-dependent fashion. Interacts with CBLB; which inhibits tyrosine phosphorylation and down-regulates activity. May interact with CCPG1. Interacts with CLNK. Interacts with THEMIS2. Interacts with NEK3 and this interaction is prolactin-dependent. Interacts with ITK. Interacts with PTK2B/PYK2. Interacts with HCK. Interacts with PTK2B/PYK2. Interacts (via SH2 domain) with SYK. Interacts with ANKRD54. Interacts with CD6. Interacts with LCP2; this interaction plays a role in TCR-mediated cytokine production. Phosphorylated by FYN. Phosphorylated on tyrosine residues by HCK in response to IFNG and bacterial lipopolysaccharide (LPS).

In terms of biological role, couples tyrosine kinase signals with the activation of the Rho/Rac GTPases, thus leading to cell differentiation and/or proliferation. This is Proto-oncogene vav (Vav1) from Rattus norvegicus (Rat).